A 212-amino-acid chain; its full sequence is Pyridoxine/pyridoxamine 5'-phosphate oxidase (212 aa).

Residues 8-11 (RREY) and Lys-66 contribute to the substrate site. FMN contacts are provided by residues 61–66 (RIVLLK), 76–77 (FT), Arg-82, Lys-83, and Gln-105. Substrate is bound by residues Tyr-123, Arg-127, and Ser-131. FMN is bound by residues 140-141 (QS) and Trp-185. 191 to 193 (RLH) contacts substrate. Arg-195 serves as a coordination point for FMN.

The protein belongs to the pyridoxamine 5'-phosphate oxidase family. Homodimer. FMN serves as cofactor.

It catalyses the reaction pyridoxamine 5'-phosphate + O2 + H2O = pyridoxal 5'-phosphate + H2O2 + NH4(+). The enzyme catalyses pyridoxine 5'-phosphate + O2 = pyridoxal 5'-phosphate + H2O2. It participates in cofactor metabolism; pyridoxal 5'-phosphate salvage; pyridoxal 5'-phosphate from pyridoxamine 5'-phosphate: step 1/1. The protein operates within cofactor metabolism; pyridoxal 5'-phosphate salvage; pyridoxal 5'-phosphate from pyridoxine 5'-phosphate: step 1/1. Catalyzes the oxidation of either pyridoxine 5'-phosphate (PNP) or pyridoxamine 5'-phosphate (PMP) into pyridoxal 5'-phosphate (PLP). This Shewanella frigidimarina (strain NCIMB 400) protein is Pyridoxine/pyridoxamine 5'-phosphate oxidase.